Consider the following 254-residue polypeptide: Probable transcriptional regulatory protein Saro_0419 (254 aa).

Over residues 1–14 (MAGHSKFKNIMHRK) the composition is skewed to basic residues. Residues 1–22 (MAGHSKFKNIMHRKGAQDKKRS) form a disordered region.

This sequence belongs to the TACO1 family.

The protein localises to the cytoplasm. The chain is Probable transcriptional regulatory protein Saro_0419 from Novosphingobium aromaticivorans (strain ATCC 700278 / DSM 12444 / CCUG 56034 / CIP 105152 / NBRC 16084 / F199).